Consider the following 361-residue polypeptide: Isopentenyl-diphosphate delta-isomerase (361 aa).

12–13 provides a ligand contact to substrate; that stretch reads RK. Residues Ser70, 71-73, Ser101, and Asn130 each bind FMN; that span reads SMT. 101 to 103 lines the substrate pocket; sequence SMR. Gln165 contacts substrate. Mg(2+) is bound at residue Glu166. Residues Lys197 and 310–311 contribute to the FMN site; that span reads AG.

Belongs to the IPP isomerase type 2 family. As to quaternary structure, homooctamer. Dimer of tetramers. FMN serves as cofactor. The cofactor is NADPH. Requires Mg(2+) as cofactor.

It localises to the cytoplasm. It catalyses the reaction isopentenyl diphosphate = dimethylallyl diphosphate. Involved in the biosynthesis of isoprenoids. Catalyzes the 1,3-allylic rearrangement of the homoallylic substrate isopentenyl (IPP) to its allylic isomer, dimethylallyl diphosphate (DMAPP). This Chlorobium luteolum (strain DSM 273 / BCRC 81028 / 2530) (Pelodictyon luteolum) protein is Isopentenyl-diphosphate delta-isomerase.